The primary structure comprises 335 residues: MSKRKAPQETLNGGITDMLTELANFEKNVNQAIHKYNAYRKAASVIAKYPHKIKSGAEAKKLPGVGTKIAEKIDEFLATGKLRKLEKIRQDDTSSSINFLTRVSGIGPSAARKFVDEGIKTLEDLRKNEDKLNHHQRIGLKYFEDFEKRIPREEMLQMQDIVLSEVKKVDSEYIATVCGSFRRGAESSGDMDVLLTHPSFTSESAKQPKLLHRVVEQLQKVRFITDTLSKGETKFMGVCQLPSKNDEKEYPHRRIDIRLIPKDQYYCGVLYFTGSDIFNKNMRAHALEKGFTINEYTIRPLGVTGVAGEPLPVDSEKDIFDYIQWKYREPKDRSE.

A Glycyl lysine isopeptide (Lys-Gly) (interchain with G-Cter in ubiquitin) cross-link involves residue K41. K60 provides a ligand contact to K(+). A Na(+)-binding site is contributed by K60. K61 is covalently cross-linked (Glycyl lysine isopeptide (Lys-Gly) (interchain with G-Cter in ubiquitin)). Residues L62 and V65 each contribute to the K(+) site. Positions 62 and 65 each coordinate Na(+). The active-site Nucleophile; Schiff-base intermediate with DNA; for 5'-dRP lyase activity is K72. At K72 the chain carries N6-acetyllysine. K81 participates in a covalent cross-link: Glycyl lysine isopeptide (Lys-Gly) (interchain with G-Cter in ubiquitin). R83 carries the omega-N-methylarginine; by PRMT6 modification. Positions 101, 103, and 106 each coordinate K(+). Residues T101, V103, and I106 each coordinate Na(+). R149 contributes to the a 2'-deoxyribonucleoside 5'-triphosphate binding site. R152 is subject to Omega-N-methylarginine; by PRMT6. A 2'-deoxyribonucleoside 5'-triphosphate is bound by residues S180, R183, G189, and D190. Residues 183–192 (RGAESSGDMD) form a DNA-binding region. Residues D190, D192, and D256 each contribute to the Mg(2+) site.

This sequence belongs to the DNA polymerase type-X family. As to quaternary structure, monomer. Binds single-stranded DNA (ssDNA). Interacts with APEX1, LIG1, LIG3, FEN1, PCNA and XRCC1. Interacts with HUWE1/ARF-BP1, STUB1/CHIP and USP47. Interacts with FAM168A. Requires Mg(2+) as cofactor. Post-translationally, methylation by PRMT6 stimulates the polymerase activity by enhancing DNA binding and processivity. In terms of processing, ubiquitinated at Lys-41, Lys-61 and Lys-81: monoubiquitinated by HUWE1/ARF-BP1. Monoubiquitinated protein is then the target of STUB1/CHIP, which catalyzes polyubiquitination from monoubiquitin, leading to degradation by the proteasome. USP47 mediates the deubiquitination of monoubiquitinated protein, preventing polyubiquitination by STUB1/CHIP and its subsequent degradation.

Its subcellular location is the nucleus. The protein resides in the cytoplasm. The enzyme catalyses DNA(n) + a 2'-deoxyribonucleoside 5'-triphosphate = DNA(n+1) + diphosphate. The catalysed reaction is a 5'-end 2'-deoxyribose-2'-deoxyribonucleotide-DNA = (2E,4S)-4-hydroxypenten-2-al-5-phosphate + a 5'-end 5'-phospho-2'-deoxyribonucleoside-DNA + H(+). It carries out the reaction 2'-deoxyribonucleotide-(2'-deoxyribose 5'-phosphate)-2'-deoxyribonucleotide-DNA = a 3'-end 2'-deoxyribonucleotide-(2,3-dehydro-2,3-deoxyribose 5'-phosphate)-DNA + a 5'-end 5'-phospho-2'-deoxyribonucleoside-DNA + H(+). In terms of biological role, repair polymerase that plays a key role in base-excision repair. During this process, the damaged base is excised by specific DNA glycosylases, the DNA backbone is nicked at the abasic site by an apurinic/apyrimidic (AP) endonuclease, and POLB removes 5'-deoxyribose-phosphate from the preincised AP site acting as a 5'-deoxyribose-phosphate lyase (5'-dRP lyase); through its DNA polymerase activity, it adds one nucleotide to the 3' end of the arising single-nucleotide gap. Conducts 'gap-filling' DNA synthesis in a stepwise distributive fashion rather than in a processive fashion as for other DNA polymerases. It is also able to cleave sugar-phosphate bonds 3' to an intact AP site, acting as an AP lyase. This Bos taurus (Bovine) protein is DNA polymerase beta (POLB).